The sequence spans 330 residues: Serine/threonine-protein phosphatase PP1-alpha catalytic subunit (330 aa).

Ser2 is modified (N-acetylserine). A phosphoserine mark is found at Ser2 and Ser22. Positions 64, 66, 92, and 124 each coordinate Mn(2+). Catalysis depends on His125, which acts as the Proton donor. Mn(2+) contacts are provided by His173 and His248. Lys305 is modified (N6-acetyllysine). Position 306 is a phosphotyrosine (Tyr306). Residues 306–330 (YGQFSGLNPGGRPITPPRNSAKAKK) form a disordered region. Thr320 is modified (phosphothreonine). Residue Ser325 is modified to Phosphoserine.

Belongs to the PPP phosphatase family. PP-1 subfamily. PP1 comprises a catalytic subunit, PPP1CA, PPP1CB or PPP1CC, which is folded into its native form by inhibitor 2 and glycogen synthetase kinase 3, and then complexed to one or several targeting or regulatory subunits. PPP1R12A, PPP1R12B and PPP1R12C mediate binding to myosin. PPP1R3A (in skeletal muscle), PPP1R3B (in liver), PPP1R3C, PPP1R3D and PPP1R3F (in brain) mediate binding to glycogen. Interacts with PPP1R39. Interacts with BTBD10. Interacts with KCTD20. Interacts with PPP1R9A and PPP1R9B. Part of a complex containing PPP1R15B, PP1 and NCK1/2. Interacts with PHACTR4; which acts as an activator of PP1 activity. Interacts with PPP1R15A and PPP1R15B; the interactions mediate binding to EIF2S1. Interacts with PPP1R7. Interacts with YLPM1. Forms a complex with ILF2, ILF3, YLPM1, KHDRBS1, RBMX and NCOA5. Interacts with NOM1 and PPP1R8. Interacts with PPP1R16B. Interacts with RPSA only in the presence of PPP1R16B. Component of the PNUTS-PP1 phosphatase complex, composed of PPP1R10/PNUTS, TOX4, WDR82, and PPP1CA or PPP1CB or PPP1CC. Interacts with PPP1R10/PNUTS and PPP1R8. Interacts with WDR82 in the presence of PPP1R10/PNUTS. Interacts with TRIM28; the interaction dephosphorylates TRIM28 on 'Ser-824' and forms a complex at the p21 promoter site. Interacts with isoform 1 and isoform 4 of NEK2. Interacts with FER; this promotes phosphorylation at Thr-320. Interacts with DAB2; the interaction is mutually exclusive with the AXIN1:PPP1CA interaction. Interacts with FOXP3. Interacts with CENPA. Interacts with ATG16L1. Found in a complex with PPP1CA, PPP1CC, SHC1 and PEAK1. Interacts with tensin TNS1. Interacts with SAXO4, PPP1R21, PPP1R26, PPP1R27, PPP1R35, PPP1R36, PPP1R37, SH3RF2, ELFN1 and ELFN2. Interacts with TPRN; the interaction results in inhibition of PPC1A phosphatase activity. Interacts with SKA1 (via C-terminus); the interaction is direct and required for the recruitment of PP1 to the kinetochore. Interacts with the KNL1 complex subunit KNL1; the interaction is direct and mutually exclusive with KNL1 binding to microtubules. Component of the SHOC2-MRAS-PP1c (SMP) complex consisting of SHOC2, GTP-bound M-Ras/MRAS and the catalytic subunit of protein phosphatase 1 (either PPP1CA, PPP1CB or PPP1CC). SHOC2 and PP1c preferably bind M-Ras/MRAS, but they also bind K-Ras/KRAS, N-Ras/NRAS and H-Ras/HRAS; these interactions are GTP-dependent and both SHOC2 and PP1c are required to form a stable complex. Interacts with SHOC2 in the absence of Ras GTPases. As to quaternary structure, (Microbial infection) Interacts with HHV-1 ICP34.5. In terms of assembly, (Microbial infection) Interacts with Venezuelan equine encephalitis virus (VEEV) capsid protein; this interaction dephosphorylates the capsid protein, which increases its ability to bind to the viral genome. It depends on Fe cation as a cofactor. Mn(2+) is required as a cofactor. In terms of processing, phosphorylated. Dephosphorylated at Thr-320 in the presence of ionizing radiation.

The protein resides in the cytoplasm. It localises to the nucleus. It is found in the nucleoplasm. The protein localises to the nucleolus. The catalysed reaction is O-phospho-L-seryl-[protein] + H2O = L-seryl-[protein] + phosphate. The enzyme catalyses O-phospho-L-threonyl-[protein] + H2O = L-threonyl-[protein] + phosphate. The phosphatase activity of the PPP1R15A-PP1 complex toward EIF2S1 is specifically inhibited by Salubrinal, a drug that protects cells from endoplasmic reticulum stress. In terms of biological role, protein phosphatase that associates with over 200 regulatory proteins to form highly specific holoenzymes which dephosphorylate hundreds of biological targets. Protein phosphatase 1 (PP1) is essential for cell division, transcription elongation, and participates in the regulation of glycogen metabolism, muscle contractility and protein synthesis. Involved in regulation of ionic conductances and long-term synaptic plasticity. May play an important role in dephosphorylating substrates such as the postsynaptic density-associated Ca(2+)/calmodulin dependent protein kinase II. Catalytic component of the PNUTS-PP1 protein phosphatase complex, a protein phosphatase 1 (PP1) complex that promotes RNA polymerase II transcription pause-release, allowing transcription elongation: the PNUTS-PP1 complex mediates the release of RNA polymerase II from promoter-proximal region of genes by catalyzing dephosphorylation of proteins involved in transcription, such as AFF4, CDK9, MEPCE, INTS12, NCBP1, POLR2M/GDOWN1 and SUPT6H. The PNUTS-PP1 complex also regulates transcription termination by mediating dephosphorylation of SUPT5H in termination zones downstream of poly(A) sites, thereby promoting deceleration of RNA polymerase II transcription. PNUTS-PP1 complex is also involved in the response to replication stress by mediating dephosphorylation of POLR2A at 'Ser-5' of the CTD, promoting RNA polymerase II degradation. PNUTS-PP1 also plays a role in the control of chromatin structure and cell cycle progression during the transition from mitosis into interphase. Regulates NEK2 function in terms of kinase activity and centrosome number and splitting, both in the presence and absence of radiation-induced DNA damage. Regulator of neural tube and optic fissure closure, and enteric neural crest cell (ENCCs) migration during development. In balance with CSNK1D and CSNK1E, determines the circadian period length, through the regulation of the speed and rhythmicity of PER1 and PER2 phosphorylation. May dephosphorylate CSNK1D and CSNK1E. Dephosphorylates the 'Ser-418' residue of FOXP3 in regulatory T-cells (Treg) from patients with rheumatoid arthritis, thereby inactivating FOXP3 and rendering Treg cells functionally defective. Dephosphorylates CENPA. Dephosphorylates the 'Ser-139' residue of ATG16L1 causing dissociation of ATG12-ATG5-ATG16L1 complex, thereby inhibiting autophagy. Together with PPP1CC (PP1-gamma subunit), dephosphorylates IFIH1/MDA5 and RIG-I leading to their activation and a functional innate immune response. Core component of the SHOC2-MRAS-PP1c (SMP) holophosphatase complex that regulates the MAPK pathway activation. The SMP complex specifically dephosphorylates the inhibitory phosphorylation at 'Ser-259' of RAF1 kinase, 'Ser-365' of BRAF kinase and 'Ser-214' of ARAF kinase, stimulating their kinase activities. The SMP complex enhances the dephosphorylation activity and substrate specificity of PP1c. Functionally, (Microbial infection) Necessary for alphaviruses replication. The sequence is that of Serine/threonine-protein phosphatase PP1-alpha catalytic subunit (PPP1CA) from Homo sapiens (Human).